The following is a 641-amino-acid chain: SUMO-activating enzyme subunit 2-B (641 aa).

Residues 24–29, Asp-48, 56–59, Lys-72, 95–96, and 117–122 each bind ATP; these read GAGGIG, NLNR, SI, and DNNAAR. Positions 158 and 161 each coordinate Zn(2+). Cys-173 serves as the catalytic Glycyl thioester intermediate. Residues Cys-439 and Cys-442 each coordinate Zn(2+). A disordered region spans residues 546–641; that stretch reads GDVPEKGPQK…EEDDDIIALD (96 aa). Basic and acidic residues predominate over residues 548 to 561; it reads VPEKGPQKPPEESV. Polar residues predominate over residues 562–579; the sequence is KNITNGSDDGAQPSTSKA. Composition is skewed to acidic residues over residues 582 to 594 and 630 to 641; these read QDDV…DEES and PVEEDDDIIALD.

The protein belongs to the ubiquitin-activating E1 family. As to quaternary structure, heterodimer of sae1 and uba2/sae2. The heterodimer corresponds to the two domains that are encoded on a single polypeptide chain in ubiquitin-activating enzyme E1. Interacts with ube2i.

The protein localises to the nucleus. Its pathway is protein modification; protein sumoylation. Its function is as follows. The heterodimer acts as an E1 ligase for sumo1, sumo2, and sumo3. It mediates ATP-dependent activation of sumo proteins followed by formation of a thioester bond between a sumo protein and a conserved active site cysteine residue on uba2/sae2. The polypeptide is SUMO-activating enzyme subunit 2-B (uba2-b) (Xenopus laevis (African clawed frog)).